Reading from the N-terminus, the 70-residue chain is Large ribosomal subunit protein uL30 (70 aa).

Belongs to the universal ribosomal protein uL30 family. Part of the 50S ribosomal subunit.

The sequence is that of Large ribosomal subunit protein uL30 from Renibacterium salmoninarum (strain ATCC 33209 / DSM 20767 / JCM 11484 / NBRC 15589 / NCIMB 2235).